The following is a 125-amino-acid chain: Large ribosomal subunit protein eL22 (125 aa).

This sequence belongs to the eukaryotic ribosomal protein eL22 family. In terms of assembly, component of the large ribosomal subunit.

It is found in the cytoplasm. Its function is as follows. Component of the large ribosomal subunit. The ribosome is a large ribonucleoprotein complex responsible for the synthesis of proteins in the cell. In Gadus morhua (Atlantic cod), this protein is Large ribosomal subunit protein eL22 (rpl22).